Reading from the N-terminus, the 405-residue chain is Arginine biosynthesis bifunctional protein ArgJ (405 aa).

The span at 1–18 (MTSADKNNPDTSTAQGSS) shows a compositional bias: polar residues. The disordered stretch occupies residues 1–21 (MTSADKNNPDTSTAQGSSADL). 6 residues coordinate substrate: Thr-167, Lys-189, Thr-200, Glu-281, Asn-400, and Thr-405. The Nucleophile role is filled by Thr-200.

Belongs to the ArgJ family. Heterotetramer of two alpha and two beta chains.

It localises to the cytoplasm. It carries out the reaction N(2)-acetyl-L-ornithine + L-glutamate = N-acetyl-L-glutamate + L-ornithine. It catalyses the reaction L-glutamate + acetyl-CoA = N-acetyl-L-glutamate + CoA + H(+). It functions in the pathway amino-acid biosynthesis; L-arginine biosynthesis; L-ornithine and N-acetyl-L-glutamate from L-glutamate and N(2)-acetyl-L-ornithine (cyclic): step 1/1. It participates in amino-acid biosynthesis; L-arginine biosynthesis; N(2)-acetyl-L-ornithine from L-glutamate: step 1/4. Functionally, catalyzes two activities which are involved in the cyclic version of arginine biosynthesis: the synthesis of N-acetylglutamate from glutamate and acetyl-CoA as the acetyl donor, and of ornithine by transacetylation between N(2)-acetylornithine and glutamate. The polypeptide is Arginine biosynthesis bifunctional protein ArgJ (Corynebacterium jeikeium (strain K411)).